The primary structure comprises 131 residues: Large ribosomal subunit protein bL17 (131 aa).

It belongs to the bacterial ribosomal protein bL17 family. As to quaternary structure, part of the 50S ribosomal subunit. Contacts protein L32.

The sequence is that of Large ribosomal subunit protein bL17 from Methylibium petroleiphilum (strain ATCC BAA-1232 / LMG 22953 / PM1).